A 269-amino-acid chain; its full sequence is Expansin-A32 (269 aa).

The signal sequence occupies residues Met1–Ala25. One can recognise an Expansin-like EG45 domain in the interval Asp60–Gly174. The region spanning Tyr184–Ala264 is the Expansin-like CBD domain.

It belongs to the expansin family. Expansin A subfamily.

The protein localises to the secreted. It is found in the cell wall. The protein resides in the membrane. In terms of biological role, may cause loosening and extension of plant cell walls by disrupting non-covalent bonding between cellulose microfibrils and matrix glucans. No enzymatic activity has been found. May be required for rapid internodal elongation in deepwater rice during submergence. The chain is Expansin-A32 (EXPA32) from Oryza sativa subsp. japonica (Rice).